Consider the following 83-residue polypeptide: Defensin-1 (83 aa).

The N-terminal stretch at 1–33 (MAGKGVGSRLSTLFLLVLLVITIGMMQVQVAEG) is a signal peptide. 4 cysteine pairs are disulfide-bonded: Cys36–Cys82, Cys47–Cys67, Cys53–Cys76, and Cys57–Cys78.

This sequence belongs to the DEFL family.

It is found in the secreted. Its function is as follows. Plant defense peptide. Has antifungal activity against B.cinera, F.oxysporum, F.solani and H.annosum with IC(50) values of 0.4 ug/ml, 2.9 ug/ml, 0.9 ug/ml and 1.4 ug/ml, respectively. Has modest antifungal activity against C.albicans and T.reesei. Causes thickening of F.oxysporum hyphae and an increase in their branching. Lacks antibacterial activity against the Gram-negative bacteria E.coli and E.carotovora. This is Defensin-1 from Pinus sylvestris (Scotch pine).